The primary structure comprises 276 residues: MLMINSFDNPRLAQAFVDYMATQGVILEIQRHDTWDIWLADEAQAERVKAELSYFLAHPGDPRYLSASWQTGQLNAGLRYRSYPFMASVRAHAGPLTLGMMALCVVAYLAMSIIGSPQVAVWLAWPFDPSLKFQLWRYVSPLLLHFSLLSLIFNLLWWWYLAGPLERSVGSGKLLTLTLVTALVGGVIQYQIAGPWFGGLGGVVYALVGYVWLRGEREPESGLYLPRGILVFMLLWLAIGGLGLFGNKTANADLVAGMLIGLAMAMTDTLHARKRK.

6 consecutive transmembrane segments (helical) span residues 94-114 (GPLT…MSII), 142-162 (LLLH…WYLA), 168-188 (SVGS…GGVI), 192-212 (IAGP…GYVW), 225-245 (LPRG…LGLF), and 252-272 (ADLV…TLHA).

Belongs to the peptidase S54 family.

It is found in the cell inner membrane. This Cronobacter sakazakii (strain ATCC BAA-894) (Enterobacter sakazakii) protein is Rhomboid protease GlpG homolog (glpG).